The primary structure comprises 201 residues: Anthranilate synthase component 2 (201 aa).

The 200-residue stretch at 2-201 folds into the Glutamine amidotransferase type-1 domain; the sequence is KVLILDNYDS…KCLLRNFINS (200 aa). 59–61 is an L-glutamine binding site; it reads GPG. The active-site Nucleophile; for GATase activity is the C89. L-glutamine-binding positions include Q93 and 139 to 140; that span reads SL. Catalysis depends on for GATase activity residues H182 and E184.

As to quaternary structure, heterotetramer consisting of two non-identical subunits: a beta subunit (TrpG) and a large alpha subunit (TrpE).

The catalysed reaction is chorismate + L-glutamine = anthranilate + pyruvate + L-glutamate + H(+). Its pathway is amino-acid biosynthesis; L-tryptophan biosynthesis; L-tryptophan from chorismate: step 1/5. Its function is as follows. Part of a heterotetrameric complex that catalyzes the two-step biosynthesis of anthranilate, an intermediate in the biosynthesis of L-tryptophan. In the first step, the glutamine-binding beta subunit (TrpG) of anthranilate synthase (AS) provides the glutamine amidotransferase activity which generates ammonia as a substrate that, along with chorismate, is used in the second step, catalyzed by the large alpha subunit of AS (TrpE) to produce anthranilate. In the absence of TrpG, TrpE can synthesize anthranilate directly from chorismate and high concentrations of ammonia. This is Anthranilate synthase component 2 (trpG) from Leptospira biflexa.